The sequence spans 338 residues: Solute carrier family 35 member G4 (338 aa).

The tract at residues 1-29 (MAGSHPYFNLPDSTHPSPPSTPPSLHWHQ) is disordered. Helical transmembrane passes span 37-57 (TNGL…VGPL), 160-180 (CGLL…LWTL), 190-210 (GLGY…LLVY), 221-241 (TVAF…LFVL), 250-270 (LLSW…FTCV), 281-301 (LVCA…YFML), and 305-325 (VAPS…IITA). The EamA 1 domain maps to 49–174 (LPAGFVGPLS…SILGLIIIVG (126 aa)). An EamA 2 domain is found at 272 to 325 (YAVTKAHPALVCAVLHSEVVMALILQYFMLHETVAPSDIMGAGVVLGSIAIITA).

This sequence belongs to the SLC35G solute transporter family.

It is found in the membrane. This is Solute carrier family 35 member G4 (SLC35G4) from Homo sapiens (Human).